The primary structure comprises 567 residues: DNA ligase B (567 aa).

Residue Lys-132 is the N6-AMP-lysine intermediate of the active site.

The protein belongs to the NAD-dependent DNA ligase family. LigB subfamily.

The enzyme catalyses NAD(+) + (deoxyribonucleotide)n-3'-hydroxyl + 5'-phospho-(deoxyribonucleotide)m = (deoxyribonucleotide)n+m + AMP + beta-nicotinamide D-nucleotide.. Its function is as follows. Catalyzes the formation of phosphodiester linkages between 5'-phosphoryl and 3'-hydroxyl groups in double-stranded DNA using NAD as a coenzyme and as the energy source for the reaction. The chain is DNA ligase B from Yersinia pseudotuberculosis serotype O:1b (strain IP 31758).